The sequence spans 493 residues: Glutamate--tRNA ligase (493 aa).

The short motif at 10–20 (PSPTGDPHVGT) is the 'HIGH' region element. Residues 251-255 (KLSKR) carry the 'KMSKS' region motif. Lys254 is a binding site for ATP.

Belongs to the class-I aminoacyl-tRNA synthetase family. Glutamate--tRNA ligase type 1 subfamily. In terms of assembly, monomer.

The protein resides in the cytoplasm. The enzyme catalyses tRNA(Glu) + L-glutamate + ATP = L-glutamyl-tRNA(Glu) + AMP + diphosphate. Its function is as follows. Catalyzes the attachment of glutamate to tRNA(Glu) in a two-step reaction: glutamate is first activated by ATP to form Glu-AMP and then transferred to the acceptor end of tRNA(Glu). The polypeptide is Glutamate--tRNA ligase (Pseudomonas putida (strain ATCC 47054 / DSM 6125 / CFBP 8728 / NCIMB 11950 / KT2440)).